Consider the following 101-residue polypeptide: MIPGEIITPAGEIELNVGRPTIKLQVSNTGDRPIQVGSHYHFYEVNTALNFDREQARGMRLDIPAGTAVRFEPGDEKEIILVPLVGTRQVYGFNAKINGNL.

Belongs to the urease beta subunit family. Heterotrimer of UreA (gamma), UreB (beta) and UreC (alpha) subunits. Three heterotrimers associate to form the active enzyme.

Its subcellular location is the cytoplasm. The catalysed reaction is urea + 2 H2O + H(+) = hydrogencarbonate + 2 NH4(+). It participates in nitrogen metabolism; urea degradation; CO(2) and NH(3) from urea (urease route): step 1/1. The sequence is that of Urease subunit beta from Nostoc punctiforme (strain ATCC 29133 / PCC 73102).